Consider the following 350-residue polypeptide: Heat-inducible transcription repressor HrcA (350 aa).

It belongs to the HrcA family.

In terms of biological role, negative regulator of class I heat shock genes (grpE-dnaK-dnaJ and groELS operons). Prevents heat-shock induction of these operons. The polypeptide is Heat-inducible transcription repressor HrcA (Methylococcus capsulatus (strain ATCC 33009 / NCIMB 11132 / Bath)).